A 114-amino-acid chain; its full sequence is WDAEPGALYTLVMTDPDVPSRKNPVFREWHHWLIINISGQNVSSGTVLSDYIGSGPPKGTGLHRYVFLVYKQPGSITDTQHGGNRRNFKVMDFANKHHLGNPVAGNFFQAKHED.

It belongs to the phosphatidylethanolamine-binding protein family.

This Onchocerca volvulus protein is Protein D2 (D2).